The sequence spans 122 residues: Large ribosomal subunit protein uL14 (122 aa).

Belongs to the universal ribosomal protein uL14 family. In terms of assembly, part of the 50S ribosomal subunit. Forms a cluster with proteins L3 and L19. In the 70S ribosome, L14 and L19 interact and together make contacts with the 16S rRNA in bridges B5 and B8.

Binds to 23S rRNA. Forms part of two intersubunit bridges in the 70S ribosome. This chain is Large ribosomal subunit protein uL14, found in Campylobacter hominis (strain ATCC BAA-381 / DSM 21671 / CCUG 45161 / LMG 19568 / NCTC 13146 / CH001A).